A 511-amino-acid polypeptide reads, in one-letter code: GMP synthase [glutamine-hydrolyzing] (511 aa).

In terms of domain architecture, Glutamine amidotransferase type-1 spans 5-195; sequence DILVLDFGSQ…AKYACNCESI (191 aa). The Nucleophile role is filled by C82. Residues H169 and E171 contribute to the active site. In terms of domain architecture, GMPS ATP-PPase spans 196-386; sequence WNMGSFAKTQ…LGLSKEVVYR (191 aa). ATP is bound at residue 223 to 229; sequence SGGVDSS.

In terms of assembly, homodimer.

It carries out the reaction XMP + L-glutamine + ATP + H2O = GMP + L-glutamate + AMP + diphosphate + 2 H(+). It functions in the pathway purine metabolism; GMP biosynthesis; GMP from XMP (L-Gln route): step 1/1. Catalyzes the synthesis of GMP from XMP. The chain is GMP synthase [glutamine-hydrolyzing] (guaA) from Campylobacter jejuni subsp. jejuni serotype O:2 (strain ATCC 700819 / NCTC 11168).